A 450-amino-acid polypeptide reads, in one-letter code: Probable ECA polymerase (450 aa).

Transmembrane regions (helical) follow at residues 6–26, 37–57, 63–83, 118–138, 155–175, 181–201, 207–227, 228–248, 341–361, 378–398, and 410–430; these read FSGL…LTWF, VFFS…TSVL, VGVA…CFYA, VILM…NGFL, GVAL…VYFL, AWLF…MIVG, IIIA…ISLW, MLAA…LKRY, LVVM…GLII, YKAA…IVLA, and VFFI…YWLF.

Belongs to the WzyE family. Probably part of a complex composed of WzxE, WzyE and WzzE.

The protein resides in the cell inner membrane. Its pathway is bacterial outer membrane biogenesis; enterobacterial common antigen biosynthesis. Functionally, probably involved in the polymerization of enterobacterial common antigen (ECA) trisaccharide repeat units. The polypeptide is Probable ECA polymerase (Escherichia coli O17:K52:H18 (strain UMN026 / ExPEC)).